Consider the following 158-residue polypeptide: NAD(P)H-quinone oxidoreductase subunit J, chloroplastic (158 aa).

Belongs to the complex I 30 kDa subunit family. As to quaternary structure, NDH is composed of at least 16 different subunits, 5 of which are encoded in the nucleus.

The protein resides in the plastid. Its subcellular location is the chloroplast thylakoid membrane. It catalyses the reaction a plastoquinone + NADH + (n+1) H(+)(in) = a plastoquinol + NAD(+) + n H(+)(out). The enzyme catalyses a plastoquinone + NADPH + (n+1) H(+)(in) = a plastoquinol + NADP(+) + n H(+)(out). Its function is as follows. NDH shuttles electrons from NAD(P)H:plastoquinone, via FMN and iron-sulfur (Fe-S) centers, to quinones in the photosynthetic chain and possibly in a chloroplast respiratory chain. The immediate electron acceptor for the enzyme in this species is believed to be plastoquinone. Couples the redox reaction to proton translocation, and thus conserves the redox energy in a proton gradient. The chain is NAD(P)H-quinone oxidoreductase subunit J, chloroplastic from Capsella bursa-pastoris (Shepherd's purse).